The chain runs to 863 residues: Leucine--tRNA ligase (863 aa).

The 'HIGH' region signature appears at 42-52 (PYPSGKIHMGH). The 'KMSKS' region signature appears at 618-622 (KMSKS). ATP is bound at residue K621.

It belongs to the class-I aminoacyl-tRNA synthetase family.

The protein localises to the cytoplasm. It catalyses the reaction tRNA(Leu) + L-leucine + ATP = L-leucyl-tRNA(Leu) + AMP + diphosphate. The protein is Leucine--tRNA ligase of Desulforapulum autotrophicum (strain ATCC 43914 / DSM 3382 / VKM B-1955 / HRM2) (Desulfobacterium autotrophicum).